A 216-amino-acid chain; its full sequence is MSAIALGMIIFAYLCGSISSAILVCRVARLPDPRTHGSGNPGATNVLRIGGRTAAVAVLLFDILKGMLPVWIAYLLHIPPLYLGLTAIAACLGHIYPVFFHFKGGKGVATAFGAIAPIGWDLTGLMTGTWLLTVLLSGYSSLGAIVSALIAPFYVWWFKPQFTFPVAMLSCLILMRHHDNIQRLWRGKEGKIWDKLRKKKQKTPAEEAAELEEKED.

5 consecutive transmembrane segments (helical) span residues 4 to 24 (IALGMIIFAYLCGSISSAILV), 56 to 76 (VAVLLFDILKGMLPVWIAYLL), 80 to 100 (PLYLGLTAIAACLGHIYPVFF), 112 to 132 (FGAIAPIGWDLTGLMTGTWLL), and 138 to 158 (GYSSLGAIVSALIAPFYVWWF).

It belongs to the PlsY family. In terms of assembly, probably interacts with PlsX.

Its subcellular location is the cell inner membrane. It carries out the reaction an acyl phosphate + sn-glycerol 3-phosphate = a 1-acyl-sn-glycero-3-phosphate + phosphate. It participates in lipid metabolism; phospholipid metabolism. Functionally, catalyzes the transfer of an acyl group from acyl-phosphate (acyl-PO(4)) to glycerol-3-phosphate (G3P) to form lysophosphatidic acid (LPA). This enzyme utilizes acyl-phosphate as fatty acyl donor, but not acyl-CoA or acyl-ACP. The polypeptide is Glycerol-3-phosphate acyltransferase (Yersinia pseudotuberculosis serotype O:1b (strain IP 31758)).